An 833-amino-acid polypeptide reads, in one-letter code: Leucine--tRNA ligase (833 aa).

The 'HIGH' region signature appears at 41-52; that stretch reads PYPSGVGLHVGH. The short motif at 610-614 is the 'KMSKS' region element; it reads KMSKS. Lys613 contributes to the ATP binding site.

Belongs to the class-I aminoacyl-tRNA synthetase family.

It is found in the cytoplasm. It carries out the reaction tRNA(Leu) + L-leucine + ATP = L-leucyl-tRNA(Leu) + AMP + diphosphate. This chain is Leucine--tRNA ligase, found in Streptococcus pneumoniae serotype 2 (strain D39 / NCTC 7466).